The following is a 466-amino-acid chain: Muscarinic acetylcholine receptor M2 (466 aa).

Over 1–22 (MNNSTNSSNNGLAITSPYKTFE) the chain is Extracellular. 3 N-linked (GlcNAc...) asparagine glycosylation sites follow: Asn2, Asn3, and Asn6. Residues 23 to 45 (VVFIVLVAGSLSLVTIIGNILVM) form a helical membrane-spanning segment. The Cytoplasmic portion of the chain corresponds to 46–59 (VSIKVNRHLQTVNN). The helical transmembrane segment at 60–80 (YFLFSLACADLIIGVFSMNLY) threads the bilayer. The Extracellular segment spans residues 81–97 (TLYTVIGYWPLGPVVCD). A disulfide bridge connects residues Cys96 and Cys176. The chain crosses the membrane as a helical span at residues 98–119 (LWLALDYVVSNASVMNLLIISF). Positions 120 to 122 (DRY) match the Important for signaling motif. The Cytoplasmic portion of the chain corresponds to 120 to 139 (DRYFCVTKPLTYPVKRTTKM). The helical transmembrane segment at 140–162 (AGMMIAAAWVLSFILWAPAILFW) threads the bilayer. The Extracellular portion of the chain corresponds to 163 to 184 (QFIVGVRTVEDGECYIQFFSNA). The helical transmembrane segment at 185 to 209 (AVTFGTAIAAFYLPVIIMTVLYWHI) threads the bilayer. Topologically, residues 210–387 (SRASKSRIKK…PPSREKKVTR (178 aa)) are cytoplasmic. The interval 218–320 (KKEKKEPVAN…SLGHSKDDNS (103 aa)) is disordered. Position 232 is a phosphoserine (Ser232). Over residues 254-270 (GLEHNKIQNGKAPRDGG) the composition is skewed to basic and acidic residues. Composition is skewed to polar residues over residues 284–293 (NDSTSVSAVA) and 304–313 (DENTVSTSLG). A helical membrane pass occupies residues 388-410 (TILAILLAFIITWAPYNVMVLIN). Over 411–418 (TFCAPCIP) the chain is Extracellular. Cys413 and Cys416 form a disulfide bridge. The chain crosses the membrane as a helical span at residues 419–442 (NTVWTIGYWLCYINSTINPACYAL). The Important for signaling signature appears at 436-440 (NPACY). Residues 443–466 (CNATFKKTFKHLLMCHYKNIGATR) lie on the Cytoplasmic side of the membrane. A phosphothreonine mark is found at Thr446, Thr450, and Thr465.

Belongs to the G-protein coupled receptor 1 family. Muscarinic acetylcholine receptor subfamily. CHRM2 sub-subfamily. As to quaternary structure, interacts with ARRB1 and ARRB2. Interacts with RACK1; the interaction regulates CHRM2 internalization. Post-translationally, phosphorylated in response to agonist treatment.

Its subcellular location is the cell membrane. It is found in the postsynaptic cell membrane. Its function is as follows. The muscarinic acetylcholine receptor mediates various cellular responses, including inhibition of adenylate cyclase, breakdown of phosphoinositides and modulation of potassium channels through the action of G proteins. Primary transducing effect is adenylate cyclase inhibition. Signaling promotes phospholipase C activity, leading to the release of inositol trisphosphate (IP3); this then triggers calcium ion release into the cytosol. The chain is Muscarinic acetylcholine receptor M2 (Chrm2) from Mus musculus (Mouse).